A 263-amino-acid polypeptide reads, in one-letter code: MLTFPRIDPVAITLGPLQFRWYGLMYLFGFLSGWWLGRRRAAQPGSRWTGEMVDDMVTYVILGVVLGGRIGYILFYDLAYYLSNPTQIFSIWNGGMSFHGGLLGVVFAMWLLGRRNGLGFMDVSDFVAPLIPPGLFFGRIGNFINGELWGKHTTLPWGMVFPDGGPFPRHPSQLYECALEGVILFLALWVFSSRKRPTGHVSGLFALLYGVFRFTVEFVREPDVQLGYLAFGWLTMGQVLCLPLIMLGLWLLRPGGDKGTKAA.

Helical transmembrane passes span 10-30, 56-76, 91-111, and 117-137; these read VAIT…LFGF, MVTY…ILFY, IWNG…AMWL, and GLGF…GLFF. Arginine 139 serves as a coordination point for a 1,2-diacyl-sn-glycero-3-phospho-(1'-sn-glycerol). 3 helical membrane passes run 171–191, 199–219, and 231–251; these read PSQL…LWVF, GHVS…VEFV, and FGWL…GLWL.

The protein belongs to the Lgt family.

The protein resides in the cell inner membrane. The catalysed reaction is L-cysteinyl-[prolipoprotein] + a 1,2-diacyl-sn-glycero-3-phospho-(1'-sn-glycerol) = an S-1,2-diacyl-sn-glyceryl-L-cysteinyl-[prolipoprotein] + sn-glycerol 1-phosphate + H(+). It functions in the pathway protein modification; lipoprotein biosynthesis (diacylglyceryl transfer). Functionally, catalyzes the transfer of the diacylglyceryl group from phosphatidylglycerol to the sulfhydryl group of the N-terminal cysteine of a prolipoprotein, the first step in the formation of mature lipoproteins. This is Phosphatidylglycerol--prolipoprotein diacylglyceryl transferase from Nitratidesulfovibrio vulgaris (strain DP4) (Desulfovibrio vulgaris).